A 1363-amino-acid polypeptide reads, in one-letter code: Kinesin-like protein kif7 (1363 aa).

Residues 15–347 form the Kinesin motor domain; that stretch reads AVQVAVRVRP…LNYAKRARNI (333 aa). 94-101 is a binding site for ATP; that stretch reads GQTGSGKT. Coiled coils occupy residues 358-385 and 491-552; these read EPDR…SETR and EDWR…LLAQ. A compositionally biased stretch (polar residues) spans 603–622; the sequence is DSSSYSEQTQWDGTHGNTHC. Residues 603–642 form a disordered region; sequence DSSSYSEQTQWDGTHGNTHCESSRKLNRDEDGHMQTTRDK. The segment covering 623 to 640 has biased composition (basic and acidic residues); that stretch reads ESSRKLNRDEDGHMQTTR. Coiled-coil stretches lie at residues 714–1068 and 1116–1225; these read LLQA…AAIE and DKVV…LREM. The tract at residues 1314-1346 is disordered; the sequence is IVQPGMNSTHWSGSTSLPVTRPRREPRRSSLNT. The span at 1318–1331 shows a compositional bias: polar residues; sequence GMNSTHWSGSTSLP.

The protein belongs to the TRAFAC class myosin-kinesin ATPase superfamily. Kinesin family. KIF27 subfamily. As to quaternary structure, binds microtubules. Interacts with gli1 and sufu.

The protein localises to the cytoplasm. The protein resides in the cytoskeleton. It is found in the cell projection. It localises to the cilium. Functionally, acts downstream of smo as an intracellular repressor of hedgehog signaling pathway, mainly through the suppression of gli1 activity. This negative regulatory effect is enhanced in conjunction with the suppressor of fused (sufu) protein. Positively regulates gli2a activity by promoting its dissociation from sufu. Involved in the regulation of microtubular dynamics. In Danio rerio (Zebrafish), this protein is Kinesin-like protein kif7 (kif7).